The primary structure comprises 616 residues: Probable beta-hexosaminidase ARB_01353 (616 aa).

The first 20 residues, 1-20 (MRFAKALAITAVLLSGVVEA), serve as a signal peptide directing secretion. The segment at 96 to 117 (KFDPFPDQSSKPKEKRQNAPPG) is disordered. Residue Asn333 is glycosylated (N-linked (GlcNAc...) asparagine). The Proton donor role is filled by Glu361.

Belongs to the glycosyl hydrolase 20 family.

The protein resides in the secreted. It carries out the reaction Hydrolysis of terminal non-reducing N-acetyl-D-hexosamine residues in N-acetyl-beta-D-hexosaminides.. Beta-hexosaminidase that shows a broad substrate specificity. The polypeptide is Probable beta-hexosaminidase ARB_01353 (Arthroderma benhamiae (strain ATCC MYA-4681 / CBS 112371) (Trichophyton mentagrophytes)).